The primary structure comprises 686 residues: AsmA family protein YhjG (686 aa).

Topologically, residues 1–6 are cytoplasmic; that stretch reads MSKAGK. The chain crosses the membrane as a helical span at residues 7 to 27; sequence ITAAISGAFLLLIVVAIILIA. The Periplasmic portion of the chain corresponds to 28 to 686; sequence TFDWNRLKPT…CRTILSQMKK (659 aa). The disordered stretch occupies residues 372 to 396; that stretch reads VDSGKGAEKSKRSEQKKGEKSVQPA. The segment covering 376 to 391 has biased composition (basic and acidic residues); that stretch reads KGAEKSKRSEQKKGEK.

It belongs to the AsmA family.

It localises to the cell inner membrane. The protein is AsmA family protein YhjG (yhjG) of Escherichia coli (strain K12).